Reading from the N-terminus, the 361-residue chain is Phospho-N-acetylmuramoyl-pentapeptide-transferase (361 aa).

The next 10 helical transmembrane spans lie at Tyr-21–Gly-41, Thr-73–Leu-93, Phe-97–Trp-117, Tyr-134–Val-154, Leu-168–Thr-188, Gly-200–Ala-220, Ala-237–Phe-257, Val-264–Ile-284, Ile-289–Val-309, and Gln-338–Leu-358.

It belongs to the glycosyltransferase 4 family. MraY subfamily. Mg(2+) serves as cofactor.

It localises to the cell inner membrane. The enzyme catalyses UDP-N-acetyl-alpha-D-muramoyl-L-alanyl-gamma-D-glutamyl-meso-2,6-diaminopimeloyl-D-alanyl-D-alanine + di-trans,octa-cis-undecaprenyl phosphate = di-trans,octa-cis-undecaprenyl diphospho-N-acetyl-alpha-D-muramoyl-L-alanyl-D-glutamyl-meso-2,6-diaminopimeloyl-D-alanyl-D-alanine + UMP. It participates in cell wall biogenesis; peptidoglycan biosynthesis. In terms of biological role, catalyzes the initial step of the lipid cycle reactions in the biosynthesis of the cell wall peptidoglycan: transfers peptidoglycan precursor phospho-MurNAc-pentapeptide from UDP-MurNAc-pentapeptide onto the lipid carrier undecaprenyl phosphate, yielding undecaprenyl-pyrophosphoryl-MurNAc-pentapeptide, known as lipid I. The chain is Phospho-N-acetylmuramoyl-pentapeptide-transferase from Methylobacillus flagellatus (strain ATCC 51484 / DSM 6875 / VKM B-1610 / KT).